A 188-amino-acid polypeptide reads, in one-letter code: dCTP deaminase (188 aa).

Residues 111–116 (KSTYAR), 135–137 (TLE), Q156, Y170, and Q180 contribute to the dCTP site. Residue E137 is the Proton donor/acceptor of the active site.

This sequence belongs to the dCTP deaminase family. Homotrimer.

The enzyme catalyses dCTP + H2O + H(+) = dUTP + NH4(+). It participates in pyrimidine metabolism; dUMP biosynthesis; dUMP from dCTP (dUTP route): step 1/2. Catalyzes the deamination of dCTP to dUTP. The polypeptide is dCTP deaminase (Neisseria gonorrhoeae (strain ATCC 700825 / FA 1090)).